The sequence spans 430 residues: MKQAFRVALGFFLLWASVLHAEVRIEITQGVDTARPIGVVPFKWAGPGAAPEDIGGIVAADLRNSGKFNPLDTSRLPQQPATASEVTPPAWTALGIDAVVVGQVQPSAAGSYVVSYQLVDTSGNPGSILAQNQFKVARKWLRYAAHTASDETFEKLTGIKGAFRTRIAYVVQTNGGQYRYELRVADYDGFNQTPVHRSPQPLMSPAWSPDGSKLAYVTFESGRSALVIQTLDSGAIRQVASFPQHNGAPAFSPDGSKLAFVLSKTGNMNLYVMDLGSGQVRQVTEGRSNNTEPSWFPDSQTLAYTSDQGGRPQVYKTNINGGTPQRLSWEGSQNQNADVSPDGKFLVMVSTNNGAQHIAKLDLATNAVQVLTDTFLDETPSVAPNGTMVIYSATQGLGSVLQLVSTDGRFKARLPATDGQVKNPAWSPYL.

Positions 1-21 (MKQAFRVALGFFLLWASVLHA) are cleaved as a signal peptide.

It belongs to the TolB family. As to quaternary structure, the Tol-Pal system is composed of five core proteins: the inner membrane proteins TolA, TolQ and TolR, the periplasmic protein TolB and the outer membrane protein Pal. They form a network linking the inner and outer membranes and the peptidoglycan layer.

Its subcellular location is the periplasm. In terms of biological role, part of the Tol-Pal system, which plays a role in outer membrane invagination during cell division and is important for maintaining outer membrane integrity. TolB occupies a key intermediary position in the Tol-Pal system because it communicates directly with both membrane-embedded components, Pal in the outer membrane and TolA in the inner membrane. The sequence is that of Tol-Pal system protein TolB from Sodalis glossinidius (strain morsitans).